Consider the following 226-residue polypeptide: Thiamine-phosphate synthase (226 aa).

4-amino-2-methyl-5-(diphosphooxymethyl)pyrimidine contacts are provided by residues glutamine 46–lysine 50 and aspartate 83. Positions 84 and 103 each coordinate Mg(2+). Position 122 (serine 122) interacts with 4-amino-2-methyl-5-(diphosphooxymethyl)pyrimidine. Threonine 149–serine 151 serves as a coordination point for 2-[(2R,5Z)-2-carboxy-4-methylthiazol-5(2H)-ylidene]ethyl phosphate. Lysine 152 is a binding site for 4-amino-2-methyl-5-(diphosphooxymethyl)pyrimidine. 2-[(2R,5Z)-2-carboxy-4-methylthiazol-5(2H)-ylidene]ethyl phosphate contacts are provided by residues glycine 181 and isoleucine 201–threonine 202.

The protein belongs to the thiamine-phosphate synthase family. Requires Mg(2+) as cofactor.

It carries out the reaction 2-[(2R,5Z)-2-carboxy-4-methylthiazol-5(2H)-ylidene]ethyl phosphate + 4-amino-2-methyl-5-(diphosphooxymethyl)pyrimidine + 2 H(+) = thiamine phosphate + CO2 + diphosphate. It catalyses the reaction 2-(2-carboxy-4-methylthiazol-5-yl)ethyl phosphate + 4-amino-2-methyl-5-(diphosphooxymethyl)pyrimidine + 2 H(+) = thiamine phosphate + CO2 + diphosphate. The enzyme catalyses 4-methyl-5-(2-phosphooxyethyl)-thiazole + 4-amino-2-methyl-5-(diphosphooxymethyl)pyrimidine + H(+) = thiamine phosphate + diphosphate. The protein operates within cofactor biosynthesis; thiamine diphosphate biosynthesis; thiamine phosphate from 4-amino-2-methyl-5-diphosphomethylpyrimidine and 4-methyl-5-(2-phosphoethyl)-thiazole: step 1/1. Functionally, condenses 4-methyl-5-(beta-hydroxyethyl)thiazole monophosphate (THZ-P) and 2-methyl-4-amino-5-hydroxymethyl pyrimidine pyrophosphate (HMP-PP) to form thiamine monophosphate (TMP). The sequence is that of Thiamine-phosphate synthase from Haemophilus influenzae (strain ATCC 51907 / DSM 11121 / KW20 / Rd).